We begin with the raw amino-acid sequence, 869 residues long: Dynamin-3 (869 aa).

A Dynamin-type G domain is found at L28–P294. Residues G38–S45 are G1 motif. Position 38-46 (G38–S46) interacts with GTP. The interval V64–R66 is G2 motif. Residues D136 to G139 form a G3 motif region. Residues T205 to D208 form a G4 motif region. Position 205-211 (T205–D211) interacts with GTP. Phosphotyrosine is present on Y231. The interval V235–S238 is G5 motif. N236–Q239 provides a ligand contact to GTP. K299 carries the post-translational modification N6-acetyllysine. A PH domain is found at I525–V631. Y603 is subject to Phosphotyrosine. At K604 the chain carries N6-acetyllysine. Positions V659–V750 constitute a GED domain. Residues T752–D869 form a disordered region. A phosphoserine mark is found at S769 and S773. The span at T775–A796 shows a compositional bias: low complexity. 2 stretches are compositionally biased toward pro residues: residues P797 to P822 and P832 to T855. A Phosphoserine modification is found at S853.

It belongs to the TRAFAC class dynamin-like GTPase superfamily. Dynamin/Fzo/YdjA family. As to expression, isoform-specific expression in germ-cell-depleted testis (Sertoli cells), brain (peripheral sensory neurons), lung and heart.

The protein localises to the cytoplasm. The protein resides in the cytoskeleton. Its subcellular location is the cytoplasmic vesicle. It localises to the golgi apparatus. It carries out the reaction GTP + H2O = GDP + phosphate + H(+). Functionally, microtubule-associated force-producing protein involved in producing microtubule bundles and able to bind and hydrolyze GTP. Most probably involved in vesicular trafficking processes, in particular endocytosis. This Rattus norvegicus (Rat) protein is Dynamin-3 (Dnm3).